Reading from the N-terminus, the 638-residue chain is Golgin subfamily A member 8S (638 aa).

Residues Met1–Pro11 are compositionally biased toward pro residues. Residues Met1–Leu84 are disordered. A compositionally biased stretch (polar residues) spans Thr50 to Gly62. 3 coiled-coil regions span residues Val105–Asp160, Leu223–Glu275, and Glu318–Gln417. 3 disordered regions span residues Ala427–Pro453, Lys510–Ala532, and Ala556–Ala575. The segment covering Gly434–Pro446 has biased composition (basic and acidic residues). The span at Leu514 to Gly525 shows a compositional bias: gly residues. Low complexity predominate over residues Asp561–Gly574.

Belongs to the GOLGA8 family.

The polypeptide is Golgin subfamily A member 8S (Homo sapiens (Human)).